The following is a 212-amino-acid chain: Ribonuclease HII (212 aa).

In terms of domain architecture, RNase H type-2 spans 2–206 (TPLVGVDEAG…CERIRAEAEQ (205 aa)). Residues Asp-8, Glu-9, and Asp-101 each coordinate a divalent metal cation.

Belongs to the RNase HII family. The cofactor is Mn(2+). It depends on Mg(2+) as a cofactor.

Its subcellular location is the cytoplasm. It carries out the reaction Endonucleolytic cleavage to 5'-phosphomonoester.. Its function is as follows. Endonuclease that specifically degrades the RNA of RNA-DNA hybrids. This Natronomonas pharaonis (strain ATCC 35678 / DSM 2160 / CIP 103997 / JCM 8858 / NBRC 14720 / NCIMB 2260 / Gabara) (Halobacterium pharaonis) protein is Ribonuclease HII.